Reading from the N-terminus, the 246-residue chain is Phosphomannomutase 2 (246 aa).

At Ala2 the chain carries N-acetylalanine. The Nucleophile role is filled by Asp12. The Mg(2+) site is built by Asp12 and Asp14. Catalysis depends on Asp14, which acts as the Proton donor/acceptor. Arg21, Arg123, Arg134, and Arg141 together coordinate alpha-D-mannose 1-phosphate. Lys149 is modified (N6-acetyllysine). Alpha-D-mannose 1-phosphate is bound by residues Ser179 and Asp181. 4 residues coordinate Mg(2+): Asp209, Phe221, Asp223, and Thr226.

It belongs to the eukaryotic PMM family. As to quaternary structure, homodimer.

The protein localises to the cytoplasm. The enzyme catalyses alpha-D-mannose 1-phosphate = D-mannose 6-phosphate. The protein operates within nucleotide-sugar biosynthesis; GDP-alpha-D-mannose biosynthesis; alpha-D-mannose 1-phosphate from D-fructose 6-phosphate: step 2/2. Involved in the synthesis of the GDP-mannose and dolichol-phosphate-mannose required for a number of critical mannosyl transfer reactions. This is Phosphomannomutase 2 (PMM2) from Homo sapiens (Human).